Here is a 586-residue protein sequence, read N- to C-terminus: Methionine--tRNA ligase, mitochondrial (586 aa).

Residues 1–46 (MLRQCARWVLTRTRFGRGCRRYGSCSPSASGDAGEARAYFTTPIFY) constitute a mitochondrion transit peptide. Residues 45–55 (FYVNAAPHIGH) carry the 'HIGH' region motif. The short motif at 340 to 344 (KMSKS) is the 'KMSKS' region element. Position 343 (Lys343) interacts with ATP.

Belongs to the class-I aminoacyl-tRNA synthetase family.

It is found in the mitochondrion matrix. It carries out the reaction tRNA(Met) + L-methionine + ATP = L-methionyl-tRNA(Met) + AMP + diphosphate. This chain is Methionine--tRNA ligase, mitochondrial (Mars2), found in Mus musculus (Mouse).